Consider the following 84-residue polypeptide: Small ribosomal subunit protein bS16c (84 aa).

Belongs to the bacterial ribosomal protein bS16 family.

The protein resides in the plastid. Its subcellular location is the chloroplast. The polypeptide is Small ribosomal subunit protein bS16c (Mesostigma viride (Green alga)).